A 258-amino-acid polypeptide reads, in one-letter code: Synaptosomal-associated protein 29 (258 aa).

The tract at residues 1–41 is disordered; it reads MSAYPKSYNPFDDDGEDEGARPAPWRDARDLPDGPDAPADR. The span at 18–32 shows a compositional bias: basic and acidic residues; that stretch reads EGARPAPWRDARDLP. Residues 76–107 adopt a coiled-coil conformation; sequence ASSEELARQRGVLERTEKMVDKMDQDLKISQK. Phosphoserine is present on residues S77, S78, and S114. A disordered region spans residues 127–190; that stretch reads PVETPPEQNG…GSAVSTDAYP (64 aa). T130 and T137 each carry phosphothreonine. Positions 132-144 are enriched in polar residues; sequence PEQNGTLASQPNS. 5 positions are modified to phosphoserine: S163, S182, S185, S204, and S210. The region spanning 196 to 258 is the t-SNARE coiled-coil homology domain; it reads QAYHQKIDSN…KSTERKVRQL (63 aa).

It belongs to the SNAP-25 family. In terms of assembly, forms a SNARE complex, composed of VAMP8, SNAP29 and STX17, involved in fusion of autophagosome with lysosome. Interacts with multiple syntaxins including STX6. Interacts with EIPR1. Interacts with STX17; this interaction is increased in the absence of TMEM39A.

The protein localises to the cytoplasm. It is found in the golgi apparatus membrane. It localises to the cytoplasmic vesicle. Its subcellular location is the autophagosome membrane. The protein resides in the cell projection. The protein localises to the cilium membrane. Functionally, SNAREs, soluble N-ethylmaleimide-sensitive factor-attachment protein receptors, are essential proteins for fusion of cellular membranes. SNAREs localized on opposing membranes assemble to form a trans-SNARE complex, an extended, parallel four alpha-helical bundle that drives membrane fusion. SNAP29 is a SNARE involved in autophagy through the direct control of autophagosome membrane fusion with the lysososome membrane. Also plays a role in ciliogenesis by regulating membrane fusions. The polypeptide is Synaptosomal-associated protein 29 (Pongo abelii (Sumatran orangutan)).